The following is a 163-amino-acid chain: Troponin C, skeletal muscle (163 aa).

Ala-2 is modified (blocked amino end (Ala)). EF-hand domains lie at Glu-18–Asn-53, Pro-54–Glu-89, Lys-94–His-129, and Val-130–Gln-163. Residues Asp-31, Asp-33, Asp-37, Glu-42, Asp-67, Asp-69, Ser-71, Thr-73, Glu-78, Asp-107, Asn-109, Asp-111, Glu-118, Asp-143, Asn-145, Asp-147, Arg-149, and Glu-154 each coordinate Ca(2+).

The protein belongs to the troponin C family.

Its function is as follows. Troponin is the central regulatory protein of striated muscle contraction. Tn consists of three components: Tn-I which is the inhibitor of actomyosin ATPase, Tn-T which contains the binding site for tropomyosin and Tn-C. The binding of calcium to Tn-C abolishes the inhibitory action of Tn on actin filaments. The polypeptide is Troponin C, skeletal muscle (TNNC2) (Gallus gallus (Chicken)).